We begin with the raw amino-acid sequence, 263 residues long: Reductase pytE (263 aa).

The protein belongs to the avfA family.

It participates in secondary metabolite biosynthesis. In terms of biological role, reductase; part of the gene cluster that mediates the biosynthesis of pyranterreones, a family of antioxidative compounds. The first step of pyranonigrins biosynthesis is performed by the hybrid PKS-NRPS synthetase pytA that condenses 4 malonyl-CoA units ato the acetyl starter unit by the modular PKS of pytA. The acyl chain is then connected to an L-serine through the amide bond by the modular NRPS of pytA. A tetramic acid is formed and released from the PKS-NRPS pytA to give pyranterreone 5 with the help of the thioesterase pytI. Pyranterreone 5 could be methylated by pytC to afford pyranterreone 6. Both pyranterreones 5 and 6 are subsequently oxidized by the FAD-linked oxidoreductase pytB and the cytochrome P450 monooxygenase pytD to form the fused gamma-pyrone core, resulting in pyranterreones 7 and 11, respectively. The hydroxy group at C-8 of pyranterreones 7 and 11 are dehydrated by the aspartyl protease pytH to form a delta-7 double bond to give pyranterreones 3 and 1, 2 accordingly. The exo-methylene of pyranterreone 3 could be reduced into a pendant methyl by reductase pytE to provide pyranterreone 4, also known as cordylactam. Pyranterreone 4 can be reconverted to pyranterreone 3 through pytB-catalyzed dehydrogenation or further oxidized to pyranterreones 9 and 10. This chain is Reductase pytE, found in Aspergillus terreus.